A 462-amino-acid polypeptide reads, in one-letter code: uncharacterized protein (462 aa).

7 WD repeats span residues 170–209, 212–260, 263–302, 305–344, 347–386, 389–430, and 433–462; these read GGER…EVQL, GHTD…PLLR, GHLA…ELLM, GHSE…SIMV, EHIR…LAHT, AHSS…LIKS, and GHEE…LWYP.

It is found in the cytoplasm. This is an uncharacterized protein from Schizosaccharomyces pombe (strain 972 / ATCC 24843) (Fission yeast).